Reading from the N-terminus, the 359-residue chain is UPF0283 membrane protein Atu1356 (359 aa).

Residues Met1 to Asp39 are disordered. A run of 2 helical transmembrane segments spans residues Phe75–Ala95 and Trp108–Val128.

It belongs to the UPF0283 family.

The protein resides in the cell inner membrane. The chain is UPF0283 membrane protein Atu1356 from Agrobacterium fabrum (strain C58 / ATCC 33970) (Agrobacterium tumefaciens (strain C58)).